The primary structure comprises 214 residues: Ribosomal RNA small subunit methyltransferase G (214 aa).

S-adenosyl-L-methionine is bound by residues glycine 81, methionine 86, 132 to 133 (VE), and arginine 147.

This sequence belongs to the methyltransferase superfamily. RNA methyltransferase RsmG family.

It is found in the cytoplasm. The catalysed reaction is guanosine(527) in 16S rRNA + S-adenosyl-L-methionine = N(7)-methylguanosine(527) in 16S rRNA + S-adenosyl-L-homocysteine. In terms of biological role, specifically methylates the N7 position of guanine in position 527 of 16S rRNA. The chain is Ribosomal RNA small subunit methyltransferase G from Pseudomonas aeruginosa (strain LESB58).